The chain runs to 402 residues: Nodulation protein E (402 aa).

Residues Asp-2 to Gln-401 enclose the Ketosynthase family 3 (KS3) domain. Residues Cys-162, His-294, and His-331 each act as for beta-ketoacyl synthase activity in the active site. A helical membrane pass occupies residues His-329–Ile-348.

It belongs to the thiolase-like superfamily. Beta-ketoacyl-ACP synthases family.

It localises to the cell inner membrane. In terms of biological role, proposed to synthesize NOD factor fatty acyl chain. Involved in the synthesis of a highly unsaturated fatty acid moiety, which forms part of a lipo-oligosaccharide that is responsible for host specificity. The sequence is that of Nodulation protein E (nodE) from Rhizobium meliloti (strain 1021) (Ensifer meliloti).